Here is a 475-residue protein sequence, read N- to C-terminus: Retrotransposon Gag-like protein 3 (475 aa).

Composition is skewed to basic and acidic residues over residues 51-66 (LLRK…KLPE) and 78-87 (KTPEFKEPQK). Disordered stretches follow at residues 51 to 101 (LLRK…EPPA), 152 to 173 (EPKN…APEY), and 397 to 421 (DPNP…ENQP). The segment at 443-462 (RLCLYCGYPGHFARDCPVKP) adopts a CCHC-type zinc-finger fold.

The protein localises to the nucleus. May function as a transcriptional regulator. Plays a role in postnatal myogenesis, may be involved in the regulation of satellite cells self-renewal. The chain is Retrotransposon Gag-like protein 3 from Homo sapiens (Human).